Here is a 387-residue protein sequence, read N- to C-terminus: DNA primase small subunit PriS (387 aa).

Residues D98, D100, and D289 contribute to the active site.

Belongs to the eukaryotic-type primase small subunit family. As to quaternary structure, heterodimer of a small subunit (PriS) and a large subunit (PriL). It depends on Mg(2+) as a cofactor. The cofactor is Mn(2+).

Functionally, catalytic subunit of DNA primase, an RNA polymerase that catalyzes the synthesis of short RNA molecules used as primers for DNA polymerase during DNA replication. The small subunit contains the primase catalytic core and has DNA synthesis activity on its own. Binding to the large subunit stabilizes and modulates the activity, increasing the rate of DNA synthesis while decreasing the length of the DNA fragments, and conferring RNA synthesis capability. The DNA polymerase activity may enable DNA primase to also catalyze primer extension after primer synthesis. May also play a role in DNA repair. The chain is DNA primase small subunit PriS from Halorubrum lacusprofundi (strain ATCC 49239 / DSM 5036 / JCM 8891 / ACAM 34).